We begin with the raw amino-acid sequence, 217 residues long: Tectonin-1 (217 aa).

6 consecutive repeat copies span residues valine 2–glycine 37, histidine 38–asparagine 74, asparagine 75–histidine 111, asparagine 112–glycine 146, serine 147–glycine 182, and lysine 183–leucine 217. The tract at residues valine 2–leucine 217 is 6 X approximate tandem repeats.

The protein belongs to the tectonin family.

The protein localises to the cell surface. It is found in the cytoplasmic vesicle membrane. Probably involved in bacterial recognition. May be a lectin that function as part of a transmembrane signaling complex during phagocytosis. This Physarum polycephalum (Slime mold) protein is Tectonin-1 (TECA).